Reading from the N-terminus, the 349-residue chain is Anaerobic nitrite reductase Glb1-3 (349 aa).

Globin domains follow at residues 13–162 (GFTE…AEMK) and 184–333 (CFTE…AEMK). Heme b contacts are provided by serine 56, lysine 70, histidine 74, lysine 104, threonine 108, histidine 109, serine 227, lysine 241, histidine 245, lysine 275, threonine 279, and histidine 280.

It belongs to the plant globin family. As to quaternary structure, monomer. Heme b serves as cofactor.

Its subcellular location is the cytoplasm. The protein localises to the nucleus. The catalysed reaction is Fe(III)-heme b-[protein] + nitric oxide + H2O = Fe(II)-heme b-[protein] + nitrite + 2 H(+). Its function is as follows. Phytoglobin that regulates the fine tuning of nitric oxide (NO) concentration in the cytosol in response to sudden changes in O(2) availability, and performs both symbiotic and nonsymbiotic functions. Exhibits NO dioxygenase activity in the presence of O(2) but nitrite reductase (NiR) activity in the absence of O(2) (e.g. during flooding or in waterlogged soil). May not function as an oxygen storage or transport protein. Extremely reactive toward the physiological ligands O(2), nitric oxide (NO), and nitrite with a very high affinity for O(2) through an hexacoordinate heme iron because of a very low dissociation constant. The sequence is that of Anaerobic nitrite reductase Glb1-3 from Medicago truncatula (Barrel medic).